The primary structure comprises 132 residues: uncharacterized protein (132 aa).

This is an uncharacterized protein from Botryotinia fuckeliana (Noble rot fungus).